Reading from the N-terminus, the 164-residue chain is MKSVITTVISAADAAGRFPSNSDLESIQGNIQRSAARLEAAEKLAGNHEAVVKEAGDACFAKYAYLKNPGEAGENQEKINKCYRDVDHYMRLVNYDLVVGGTGPLDEWGIAGAREVYRTLNLPTSAYVASIAYTRDRLCVPRDMSAQAGVEFSAYLDYLINALS.

2 residues coordinate (2R,3E)-phycoerythrobilin: Cys82 and Cys139.

The protein belongs to the phycobiliprotein family. In terms of assembly, heteromer of 6 alpha, 6 beta and one gamma chain. In terms of processing, contains two covalently linked bilin chromophores.

It localises to the plastid. It is found in the chloroplast thylakoid membrane. In terms of biological role, light-harvesting photosynthetic bile pigment-protein from the phycobiliprotein complex. The sequence is that of B-phycoerythrin alpha chain (cpeA) from Porphyridium sordidum (Red alga).